The primary structure comprises 258 residues: Proteasome subunit alpha (258 aa).

Belongs to the peptidase T1A family. In terms of assembly, the 20S proteasome core is composed of 14 alpha and 14 beta subunits that assemble into four stacked heptameric rings, resulting in a barrel-shaped structure. The two inner rings, each composed of seven catalytic beta subunits, are sandwiched by two outer rings, each composed of seven alpha subunits. The catalytic chamber with the active sites is on the inside of the barrel. Has a gated structure, the ends of the cylinder being occluded by the N-termini of the alpha-subunits. Is capped by the proteasome-associated ATPase, ARC.

It localises to the cytoplasm. Its pathway is protein degradation; proteasomal Pup-dependent pathway. With respect to regulation, the formation of the proteasomal ATPase ARC-20S proteasome complex, likely via the docking of the C-termini of ARC into the intersubunit pockets in the alpha-rings, may trigger opening of the gate for substrate entry. Interconversion between the open-gate and close-gate conformations leads to a dynamic regulation of the 20S proteasome proteolysis activity. Its function is as follows. Component of the proteasome core, a large protease complex with broad specificity involved in protein degradation. The protein is Proteasome subunit alpha of Nocardia farcinica (strain IFM 10152).